A 171-amino-acid chain; its full sequence is ATP synthase subunit b (171 aa).

A helical transmembrane segment spans residues 13-33 (GVEWGTTFVTLVTFVILIILL).

This sequence belongs to the ATPase B chain family. F-type ATPases have 2 components, F(1) - the catalytic core - and F(0) - the membrane proton channel. F(1) has five subunits: alpha(3), beta(3), gamma(1), delta(1), epsilon(1). F(0) has three main subunits: a(1), b(2) and c(10-14). The alpha and beta chains form an alternating ring which encloses part of the gamma chain. F(1) is attached to F(0) by a central stalk formed by the gamma and epsilon chains, while a peripheral stalk is formed by the delta and b chains.

The protein localises to the cell membrane. Functionally, f(1)F(0) ATP synthase produces ATP from ADP in the presence of a proton or sodium gradient. F-type ATPases consist of two structural domains, F(1) containing the extramembraneous catalytic core and F(0) containing the membrane proton channel, linked together by a central stalk and a peripheral stalk. During catalysis, ATP synthesis in the catalytic domain of F(1) is coupled via a rotary mechanism of the central stalk subunits to proton translocation. Its function is as follows. Component of the F(0) channel, it forms part of the peripheral stalk, linking F(1) to F(0). The protein is ATP synthase subunit b of Staphylococcus epidermidis (strain ATCC 12228 / FDA PCI 1200).